Reading from the N-terminus, the 272-residue chain is MDKYAVIGNPVEHSLSPVIFQAFEKQTNHSFDYLKIKAPVNGFAAAVKKFHDKGGKGANITLPFKEEAYQLADKRSQEANEAHAASALQFREDGTIYAVNYDGLGLVQDLTRNHNITLTQKSILIVGAGGATRGILGPLLNAAPEKIVIVNRTPSKAHALAKIFHLRGEIQGGGFDELEPMRYDVIIHATSLGHQGKFPPLPDGLIGSQSCCYDLSYGKIASPFLQWAKDQGAKYNFDGLGMLVEHNAAVFYLWFGIYPDTNPVIEMLQAHL.

Shikimate contacts are provided by residues 14-16 and threonine 61; that span reads SLS. Lysine 65 serves as the catalytic Proton acceptor. Shikimate is bound at residue aspartate 102. NADP(+)-binding positions include 127–131, 151–156, and leucine 215; these read GAGGA and NRTPSK. Tyrosine 217 is a binding site for shikimate. Position 239 (glycine 239) interacts with NADP(+).

Belongs to the shikimate dehydrogenase family. Homodimer.

It carries out the reaction shikimate + NADP(+) = 3-dehydroshikimate + NADPH + H(+). Its pathway is metabolic intermediate biosynthesis; chorismate biosynthesis; chorismate from D-erythrose 4-phosphate and phosphoenolpyruvate: step 4/7. In terms of biological role, involved in the biosynthesis of the chorismate, which leads to the biosynthesis of aromatic amino acids. Catalyzes the reversible NADPH linked reduction of 3-dehydroshikimate (DHSA) to yield shikimate (SA). The chain is Shikimate dehydrogenase (NADP(+)) from Coxiella burnetii (strain Dugway 5J108-111).